Consider the following 344-residue polypeptide: Anthranilate phosphoribosyltransferase (344 aa).

5-phospho-alpha-D-ribose 1-diphosphate contacts are provided by residues Gly86, 89–90, Thr94, 96–99, 114–122, and Ser126; these read GD, NIST, and KHGNKSASG. Residue Gly86 coordinates anthranilate. Mg(2+) is bound at residue Ser98. An anthranilate-binding site is contributed by Asn117. Arg172 is a binding site for anthranilate. Residues Asp231 and Glu232 each contribute to the Mg(2+) site.

This sequence belongs to the anthranilate phosphoribosyltransferase family. Homodimer. Mg(2+) is required as a cofactor.

It carries out the reaction N-(5-phospho-beta-D-ribosyl)anthranilate + diphosphate = 5-phospho-alpha-D-ribose 1-diphosphate + anthranilate. Its pathway is amino-acid biosynthesis; L-tryptophan biosynthesis; L-tryptophan from chorismate: step 2/5. Functionally, catalyzes the transfer of the phosphoribosyl group of 5-phosphorylribose-1-pyrophosphate (PRPP) to anthranilate to yield N-(5'-phosphoribosyl)-anthranilate (PRA). The chain is Anthranilate phosphoribosyltransferase from Prochlorococcus marinus (strain MIT 9301).